We begin with the raw amino-acid sequence, 251 residues long: Octanoyltransferase (251 aa).

A BPL/LPL catalytic domain is found at 56-237; that stretch reads ADTGDEIWVV…RLIANLDGES (182 aa). Residues 96 to 103, 168 to 170, and 181 to 183 contribute to the substrate site; these read RGGQITYH, ALG, and GLS. Residue Cys199 is the Acyl-thioester intermediate of the active site.

The protein belongs to the LipB family.

The protein localises to the cytoplasm. It catalyses the reaction octanoyl-[ACP] + L-lysyl-[protein] = N(6)-octanoyl-L-lysyl-[protein] + holo-[ACP] + H(+). It participates in protein modification; protein lipoylation via endogenous pathway; protein N(6)-(lipoyl)lysine from octanoyl-[acyl-carrier-protein]: step 1/2. Its function is as follows. Catalyzes the transfer of endogenously produced octanoic acid from octanoyl-acyl-carrier-protein onto the lipoyl domains of lipoate-dependent enzymes. Lipoyl-ACP can also act as a substrate although octanoyl-ACP is likely to be the physiological substrate. The protein is Octanoyltransferase of Burkholderia ambifaria (strain ATCC BAA-244 / DSM 16087 / CCUG 44356 / LMG 19182 / AMMD) (Burkholderia cepacia (strain AMMD)).